We begin with the raw amino-acid sequence, 316 residues long: Cytochrome c biogenesis protein CcsA (316 aa).

The next 8 helical transmembrane spans lie at 12–32 (HISL…LLVY), 44–64 (GMVA…IYSG), 71–91 (LYES…IPYF), 98–118 (LNVL…SGVL), 145–165 (LSYA…VILF), 222–242 (VISL…VWAN), 256–270 (TWAF…IYLH), and 283–303 (AIVA…VNLL).

It belongs to the CcmF/CycK/Ccl1/NrfE/CcsA family. As to quaternary structure, may interact with Ccs1.

The protein resides in the plastid. The protein localises to the chloroplast thylakoid membrane. In terms of biological role, required during biogenesis of c-type cytochromes (cytochrome c6 and cytochrome f) at the step of heme attachment. This is Cytochrome c biogenesis protein CcsA from Ranunculus macranthus (Large buttercup).